The chain runs to 564 residues: O-fucosyltransferase 6 (564 aa).

A helical; Signal-anchor for type II membrane protein membrane pass occupies residues 17 to 37 (LLPFICAVSGALLILFALLSI). 2 N-linked (GlcNAc...) asparagine glycosylation sites follow: asparagine 95 and asparagine 139. A substrate-binding site is contributed by 277-279 (HLR). The N-linked (GlcNAc...) asparagine glycan is linked to asparagine 449. The segment covering 501–512 (MDSRKFGKKEQK) has biased composition (basic and acidic residues). A disordered region spans residues 501–542 (MDSRKFGKKEQKEDEDAELSSSETDYEEDQTDLQDRGLYNGT). Positions 513 to 532 (EDEDAELSSSETDYEEDQTD) are enriched in acidic residues. Asparagine 540 carries an N-linked (GlcNAc...) asparagine glycan.

The protein belongs to the glycosyltransferase GT106 family.

The protein resides in the membrane. The protein operates within glycan metabolism. In Arabidopsis thaliana (Mouse-ear cress), this protein is O-fucosyltransferase 6.